The following is a 206-amino-acid chain: Endoribonuclease YbeY (206 aa).

The interval 1–20 (MSQANHNDTHNNIDDNINNH) is disordered. Zn(2+) contacts are provided by His-168, His-172, and His-178.

It belongs to the endoribonuclease YbeY family. It depends on Zn(2+) as a cofactor.

The protein localises to the cytoplasm. Single strand-specific metallo-endoribonuclease involved in late-stage 70S ribosome quality control and in maturation of the 3' terminus of the 16S rRNA. The polypeptide is Endoribonuclease YbeY (Psychrobacter arcticus (strain DSM 17307 / VKM B-2377 / 273-4)).